The chain runs to 360 residues: Phospho-N-acetylmuramoyl-pentapeptide-transferase (360 aa).

10 helical membrane passes run 27-47 (VMAV…LIRF), 71-91 (TPTM…LLWA), 98-118 (VWIV…DDYL), 142-162 (LVLA…TFVM), 168-188 (YMPY…VGSS), 199-219 (GLAI…AYLT), 236-256 (ASEL…FLWF), 263-283 (VFMG…IAVL), 288-308 (ILLV…ILQV), and 338-358 (VIVR…VTLK).

It belongs to the glycosyltransferase 4 family. MraY subfamily. It depends on Mg(2+) as a cofactor.

It localises to the cell inner membrane. The catalysed reaction is UDP-N-acetyl-alpha-D-muramoyl-L-alanyl-gamma-D-glutamyl-meso-2,6-diaminopimeloyl-D-alanyl-D-alanine + di-trans,octa-cis-undecaprenyl phosphate = di-trans,octa-cis-undecaprenyl diphospho-N-acetyl-alpha-D-muramoyl-L-alanyl-D-glutamyl-meso-2,6-diaminopimeloyl-D-alanyl-D-alanine + UMP. The protein operates within cell wall biogenesis; peptidoglycan biosynthesis. Catalyzes the initial step of the lipid cycle reactions in the biosynthesis of the cell wall peptidoglycan: transfers peptidoglycan precursor phospho-MurNAc-pentapeptide from UDP-MurNAc-pentapeptide onto the lipid carrier undecaprenyl phosphate, yielding undecaprenyl-pyrophosphoryl-MurNAc-pentapeptide, known as lipid I. This Psychromonas ingrahamii (strain DSM 17664 / CCUG 51855 / 37) protein is Phospho-N-acetylmuramoyl-pentapeptide-transferase.